We begin with the raw amino-acid sequence, 417 residues long: 4-hydroxy-3-methylbut-2-en-1-yl diphosphate synthase (flavodoxin) (417 aa).

Residues Cys-305, Cys-308, Cys-351, and Glu-358 each coordinate [4Fe-4S] cluster.

This sequence belongs to the IspG family. Requires [4Fe-4S] cluster as cofactor.

The enzyme catalyses (2E)-4-hydroxy-3-methylbut-2-enyl diphosphate + oxidized [flavodoxin] + H2O + 2 H(+) = 2-C-methyl-D-erythritol 2,4-cyclic diphosphate + reduced [flavodoxin]. It functions in the pathway isoprenoid biosynthesis; isopentenyl diphosphate biosynthesis via DXP pathway; isopentenyl diphosphate from 1-deoxy-D-xylulose 5-phosphate: step 5/6. Functionally, converts 2C-methyl-D-erythritol 2,4-cyclodiphosphate (ME-2,4cPP) into 1-hydroxy-2-methyl-2-(E)-butenyl 4-diphosphate. This chain is 4-hydroxy-3-methylbut-2-en-1-yl diphosphate synthase (flavodoxin), found in Nitrosomonas europaea (strain ATCC 19718 / CIP 103999 / KCTC 2705 / NBRC 14298).